The chain runs to 951 residues: Translation initiation factor IF-2 (951 aa).

Disordered regions lie at residues 58-255 (AERK…AVVI) and 305-329 (DVSR…KSLS). Over residues 101–170 (AEPQYAEPQQ…PQAQPAQPAA (70 aa)) the composition is skewed to low complexity. A compositionally biased stretch (pro residues) spans 171 to 216 (PVAPPAPSAQPSAPQPPAAQPRPPQPPMPSRPPPAGYRPAPPPGAR). Residues 217–234 (PPMSAAPGAPAQPGAAGQ) show a composition bias toward low complexity. One can recognise a tr-type G domain in the interval 450–619 (IRPPVVTVMG…ALQSEVLELK (170 aa)). The G1 stretch occupies residues 459–466 (GHVDHGKT). 459–466 (GHVDHGKT) contributes to the GTP binding site. Positions 484 to 488 (GITQH) are G2. Positions 505-508 (DTPG) are G3. GTP-binding positions include 505 to 509 (DTPGH) and 559 to 562 (NKVD). The tract at residues 559–562 (NKVD) is G4. The interval 595–597 (SAR) is G5.

Belongs to the TRAFAC class translation factor GTPase superfamily. Classic translation factor GTPase family. IF-2 subfamily.

It localises to the cytoplasm. Functionally, one of the essential components for the initiation of protein synthesis. Protects formylmethionyl-tRNA from spontaneous hydrolysis and promotes its binding to the 30S ribosomal subunits. Also involved in the hydrolysis of GTP during the formation of the 70S ribosomal complex. The protein is Translation initiation factor IF-2 of Anaeromyxobacter dehalogenans (strain 2CP-1 / ATCC BAA-258).